We begin with the raw amino-acid sequence, 92 residues long: YcgL domain-containing protein Sama_1929 (92 aa).

The YcgL domain maps to 1-85 (MICAVYKSSR…PKDNLLTQHR (85 aa)).

The sequence is that of YcgL domain-containing protein Sama_1929 from Shewanella amazonensis (strain ATCC BAA-1098 / SB2B).